The following is a 310-amino-acid chain: Upstream stimulatory factor 1 (310 aa).

A compositionally biased stretch (polar residues) spans 1 to 17; sequence MKGQQKTAETEEGTVQI. Disordered stretches follow at residues 1–26 and 171–209; these read MKGQ…ATGE and QGGS…EVER. The span at 190 to 209 shows a compositional bias: basic and acidic residues; it reads EAPRTTRDEKRRAQHNEVER. Residues 199–254 form the bHLH domain; the sequence is KRRAQHNEVERRRRDKINNWIVQLSKIIPDCSMESTKSGQSKGGILSKACDYIQEL. Residues 271-292 are leucine-zipper; it reads LQLDNDVLRQQVEDLKNKNLLL. Lys-306 is covalently cross-linked (Glycyl lysine isopeptide (Lys-Gly) (interchain with G-Cter in SUMO2)).

As to quaternary structure, efficient DNA binding requires dimerization with another bHLH protein. Binds DNA as a homodimer or a heterodimer (USF1/USF2).

It is found in the nucleus. Transcription factor that binds to a symmetrical DNA sequence (E-boxes) (5'-CACGTG-3') that is found in a variety of viral and cellular promoters. This chain is Upstream stimulatory factor 1 (USF1), found in Bos taurus (Bovine).